A 363-amino-acid chain; its full sequence is 3-dehydroquinate synthase (363 aa).

NAD(+) is bound by residues 134–135 (TT), lysine 147, and lysine 156. Glutamate 189, histidine 254, and histidine 271 together coordinate Zn(2+).

This sequence belongs to the sugar phosphate cyclases superfamily. Dehydroquinate synthase family. It depends on Co(2+) as a cofactor. Zn(2+) is required as a cofactor. Requires NAD(+) as cofactor.

The protein resides in the cytoplasm. It carries out the reaction 7-phospho-2-dehydro-3-deoxy-D-arabino-heptonate = 3-dehydroquinate + phosphate. The protein operates within metabolic intermediate biosynthesis; chorismate biosynthesis; chorismate from D-erythrose 4-phosphate and phosphoenolpyruvate: step 2/7. In terms of biological role, catalyzes the conversion of 3-deoxy-D-arabino-heptulosonate 7-phosphate (DAHP) to dehydroquinate (DHQ). The chain is 3-dehydroquinate synthase from Prochlorococcus marinus (strain MIT 9312).